The primary structure comprises 857 residues: DNA mismatch repair protein MutS (857 aa).

608–615 (GPNMSGKS) is an ATP binding site.

It belongs to the DNA mismatch repair MutS family.

In terms of biological role, this protein is involved in the repair of mismatches in DNA. It is possible that it carries out the mismatch recognition step. This protein has a weak ATPase activity. The protein is DNA mismatch repair protein MutS of Lacticaseibacillus casei (strain BL23) (Lactobacillus casei).